Reading from the N-terminus, the 271-residue chain is Formamidopyrimidine-DNA glycosylase (271 aa).

P2 acts as the Schiff-base intermediate with DNA in catalysis. E3 (proton donor) is an active-site residue. Residue K56 is the Proton donor; for beta-elimination activity of the active site. H89, R107, and K151 together coordinate DNA. The FPG-type zinc finger occupies 236–270 (NVYGRAGLQCRQCGTPVRLSRQGQRSTYFCPHCQR). R260 (proton donor; for delta-elimination activity) is an active-site residue.

This sequence belongs to the FPG family. In terms of assembly, monomer. Zn(2+) serves as cofactor.

The catalysed reaction is Hydrolysis of DNA containing ring-opened 7-methylguanine residues, releasing 2,6-diamino-4-hydroxy-5-(N-methyl)formamidopyrimidine.. The enzyme catalyses 2'-deoxyribonucleotide-(2'-deoxyribose 5'-phosphate)-2'-deoxyribonucleotide-DNA = a 3'-end 2'-deoxyribonucleotide-(2,3-dehydro-2,3-deoxyribose 5'-phosphate)-DNA + a 5'-end 5'-phospho-2'-deoxyribonucleoside-DNA + H(+). In terms of biological role, involved in base excision repair of DNA damaged by oxidation or by mutagenic agents. Acts as a DNA glycosylase that recognizes and removes damaged bases. Has a preference for oxidized purines, such as 7,8-dihydro-8-oxoguanine (8-oxoG). Has AP (apurinic/apyrimidinic) lyase activity and introduces nicks in the DNA strand. Cleaves the DNA backbone by beta-delta elimination to generate a single-strand break at the site of the removed base with both 3'- and 5'-phosphates. This Acidovorax ebreus (strain TPSY) (Diaphorobacter sp. (strain TPSY)) protein is Formamidopyrimidine-DNA glycosylase.